The chain runs to 159 residues: SsrA-binding protein (159 aa).

The protein belongs to the SmpB family.

It is found in the cytoplasm. In terms of biological role, required for rescue of stalled ribosomes mediated by trans-translation. Binds to transfer-messenger RNA (tmRNA), required for stable association of tmRNA with ribosomes. tmRNA and SmpB together mimic tRNA shape, replacing the anticodon stem-loop with SmpB. tmRNA is encoded by the ssrA gene; the 2 termini fold to resemble tRNA(Ala) and it encodes a 'tag peptide', a short internal open reading frame. During trans-translation Ala-aminoacylated tmRNA acts like a tRNA, entering the A-site of stalled ribosomes, displacing the stalled mRNA. The ribosome then switches to translate the ORF on the tmRNA; the nascent peptide is terminated with the 'tag peptide' encoded by the tmRNA and targeted for degradation. The ribosome is freed to recommence translation, which seems to be the essential function of trans-translation. In Idiomarina loihiensis (strain ATCC BAA-735 / DSM 15497 / L2-TR), this protein is SsrA-binding protein.